The sequence spans 423 residues: G-protein coupled receptor 83 (423 aa).

Positions Met-1–Ala-16 are cleaved as a signal peptide. The Extracellular segment spans residues Glu-18–Lys-71. 2 N-linked (GlcNAc...) asparagine glycosylation sites follow: Asn-37 and Asn-46. Residues Ala-72 to Val-92 form a helical membrane-spanning segment. The Cytoplasmic portion of the chain corresponds to Cys-93 to Ser-107. A helical membrane pass occupies residues Leu-108–Leu-129. The Extracellular segment spans residues Val-130 to His-145. Asn-134 is a glycosylation site (N-linked (GlcNAc...) asparagine). Cys-144 and Cys-224 form a disulfide bridge. A helical membrane pass occupies residues Val-146–Val-167. The Cytoplasmic segment spans residues Asp-168 to Gly-186. Residues Val-187 to Gln-208 traverse the membrane as a helical segment. Over Lys-209 to Tyr-238 the chain is Extracellular. The helical transmembrane segment at Leu-239–Ala-260 threads the bilayer. At Arg-261–Met-293 the chain is on the cytoplasmic side. A helical membrane pass occupies residues Leu-294–Leu-315. Residues Ser-316 to Tyr-327 lie on the Extracellular side of the membrane. A helical membrane pass occupies residues Phe-328–Leu-348. Residues Asn-349–Ser-423 are Cytoplasmic-facing. Residues Pro-402–Ser-414 are compositionally biased toward polar residues. The segment at Pro-402–Ser-423 is disordered.

The protein belongs to the G-protein coupled receptor 1 family. Highly expressed in the brain and spinal cord, and found in lower concentrations in the thymus and other tissues.

The protein localises to the cell membrane. G-protein coupled receptor for PEN, a neuropeptide produced from the precursor protein, proSAAS (encoded by PCSK1N). Acts through a G(i)- and G(q)-alpha-alpha-mediated pathway in response to PEN. Plays a role in food intake and body weight regulation. May contribute to the regulation of anxiety-related behaviors. The protein is G-protein coupled receptor 83 of Homo sapiens (Human).